Here is a 418-residue protein sequence, read N- to C-terminus: Nucleoside permease NupC (418 aa).

The next 9 helical transmembrane spans lie at 2 to 22 (IFSS…AWVF), 34 to 54 (IVSA…VPLG), 93 to 113 (IGGF…ASLI), 174 to 194 (IFAV…AGYA), 198 to 218 (IPLP…LLFA), 264 to 284 (LLAF…VGGF), 292 to 314 (LGLI…WSQA), 354 to 374 (AIIT…MLIG), and 395 to 415 (VLVG…FIGL).

Belongs to the concentrative nucleoside transporter (CNT) (TC 2.A.41) family.

The protein localises to the cell inner membrane. In terms of biological role, involved in purine nucleosides uptake. Could also be involved in uptake of nucleobases. This is Nucleoside permease NupC from Helicobacter pylori (strain ATCC 700392 / 26695) (Campylobacter pylori).